A 377-amino-acid chain; its full sequence is Protein RecA (377 aa).

The span at Met-1 to Ser-13 shows a compositional bias: polar residues. The tract at residues Met-1–Ser-20 is disordered. Position 82–89 (Gly-82–Thr-89) interacts with ATP. Residues Gly-346–Gly-377 form a disordered region. Positions Arg-362–Gly-377 are enriched in polar residues.

The protein belongs to the RecA family.

It localises to the cytoplasm. Its function is as follows. Can catalyze the hydrolysis of ATP in the presence of single-stranded DNA, the ATP-dependent uptake of single-stranded DNA by duplex DNA, and the ATP-dependent hybridization of homologous single-stranded DNAs. It interacts with LexA causing its activation and leading to its autocatalytic cleavage. In Prochlorococcus marinus (strain NATL1A), this protein is Protein RecA.